Reading from the N-terminus, the 426-residue chain is C4-dicarboxylate transport protein (426 aa).

The next 8 membrane-spanning stretches (helical) occupy residues 4-24, 44-64, 76-96, 142-162, 184-204, 222-242, 326-346, and 352-372; these read SIFT…ILLG, LIKM…IAGM, IALL…LVVV, IGAF…MFGF, VIFG…FGAM, LILC…GSIA, IWHQ…AAGV, and IVLA…LALI.

This sequence belongs to the dicarboxylate/amino acid:cation symporter (DAACS) (TC 2.A.23) family.

It localises to the cell inner membrane. Functionally, responsible for the transport of dicarboxylates such as succinate, fumarate, and malate from the periplasm across the membrane. In Edwardsiella ictaluri (strain 93-146), this protein is C4-dicarboxylate transport protein.